Here is a 298-residue protein sequence, read N- to C-terminus: Adaptation to cold protein C (298 aa).

In terms of assembly, interacts with the C-terminal extension of AtcJ. Also interacts with AtcB, but not with AtcA.

With respect to regulation, interaction with AtcJ stabilizes AtcC. In terms of biological role, involved in cold adaptation. In Shewanella oneidensis (strain ATCC 700550 / JCM 31522 / CIP 106686 / LMG 19005 / NCIMB 14063 / MR-1), this protein is Adaptation to cold protein C.